The sequence spans 977 residues: Phosphatidylinositol 4-kinase PIK1alpha (977 aa).

In terms of domain architecture, PIK helical spans 1 to 125 (MSADITETPN…QAVRNLITKI (125 aa)). The disordered stretch occupies residues 205–261 (MSADIPKGSHSDDETATSSSIKPSLSRSASVPRRNTKKTSLSFSSDESEAYTTDDDD). Residues 220 to 233 (ATSSSIKPSLSRSA) show a composition bias toward polar residues. The span at 250–261 (DESEAYTTDDDD) shows a compositional bias: acidic residues. Residues 679–960 (EDWNTKKQRI…FLIGKSLGSM (282 aa)) form the PI3K/PI4K catalytic domain. The G-loop stretch occupies residues 685–691 (KQRIKKS). Positions 826 to 834 (QIKDRHNGN) are catalytic loop. Positions 845 to 869 (HIDFGFLLSNSPGSVGFEAAPFKLT) are activation loop.

Belongs to the PI3/PI4-kinase family. Type III PI4K subfamily.

The protein resides in the nucleus. It carries out the reaction a 1,2-diacyl-sn-glycero-3-phospho-(1D-myo-inositol) + ATP = a 1,2-diacyl-sn-glycero-3-phospho-(1D-myo-inositol 4-phosphate) + ADP + H(+). In terms of biological role, acts on phosphatidylinositol (PI) in the first committed step in the production of the second messenger inositol 1,4,5,-trisphosphate. This Candida albicans (strain SC5314 / ATCC MYA-2876) (Yeast) protein is Phosphatidylinositol 4-kinase PIK1alpha (PIKALPHA).